Here is a 501-residue protein sequence, read N- to C-terminus: Aldehyde dehydrogenase, cytosolic 1 (501 aa).

Residue 246–251 (GSTEVG) participates in NAD(+) binding. Glu-269 (proton acceptor) is an active-site residue. Cys-303 acts as the Nucleophile in catalysis.

This sequence belongs to the aldehyde dehydrogenase family. Homotetramer. As to expression, eye specific, with very high expression in the lens.

The protein resides in the cytoplasm. The catalysed reaction is an aldehyde + NAD(+) + H2O = a carboxylate + NADH + 2 H(+). The protein operates within alcohol metabolism; ethanol degradation; acetate from ethanol: step 2/2. Functionally, major component of the eye of elephant shrews, which in contrast to other mammals, possesses both a lens- and a non-lens class-1 aldehyde dehydrogenase 1. This eye-specific form is a structural protein of the lens and, in other part of the eye, serves as the major form of ALDH1. Can convert/oxidize retinaldehyde to retinoic acid. The protein is Aldehyde dehydrogenase, cytosolic 1 (ALDH1) of Macroscelides proboscideus (Short-eared elephant shrew).